Here is a 661-residue protein sequence, read N- to C-terminus: Vasorin (661 aa).

The signal sequence occupies residues 1–19; sequence MWHLLVWIILLATAQQMIT. The LRRNT domain occupies 20-50; that stretch reads EGCPAGCQCNTPQTVFCLARKNSNFPRSVPP. At 20 to 563 the chain is on the extracellular side; it reads EGCPAGCQCN…VTQSQEGNLT (544 aa). LRR repeat units lie at residues 52–72, 75–96, 99–120, 123–144, 147–168, 169–189, 191–212, 215–237, 238–258, and 259–281; these read TLNLYVFENGISSIEESSFIG, GLHLLDLSHNQLSSLPGGVFRN, NLSNLDLTSNQLTEISADTFQG, RLERLYLNGNRIRSIHPEAFKG, SLLELKLSNNQLVTPPAFSLPH, LLLLDLSYNAIPVIQQGVFNA, NIESLRLAGLGLKEVPEELLSG, NLHELDLSDNQLDKVPPGLHGLT, KLNIAGNVGFSQIQVDDLSNL, and PALQELDLSGLSLQTLPKGLFRS. A glycan (N-linked (GlcNAc...) asparagine) is linked at Asn-99. Residues 293-346 form the LRRCT domain; that stretch reads NPFNCVCSLGWLSEWMRVSGVVLLRPDETRCHFPPKNAGKTLRQLRDSEYGCPA. A compositionally biased stretch (low complexity) spans 348–385; that stretch reads TTIQMPSTMPPSTTTGPPTTTKHLQTEAPTTASTTTTT. The segment at 348-395 is disordered; the sequence is TTIQMPSTMPPSTTTGPPTTTKHLQTEAPTTASTTTTTIPHQEQEEDT. The EGF-like domain maps to 403 to 440; it reads EDTLCPPQTCLNGGSCHLDPTGQLECECPPGFQGTYCE. Intrachain disulfides connect Cys-407–Cys-418, Cys-412–Cys-428, and Cys-430–Cys-439. The region spanning 455-543 is the Fibronectin type-III domain; it reads EQVKIIEVTV…EEDLCTETHT (89 aa). 2 N-linked (GlcNAc...) asparagine glycosylation sites follow: Asn-518 and Asn-561. The helical transmembrane segment at 564–584 threads the bilayer; it reads LVLVPAVAAGILLSAAVAAAA. At 585 to 661 the chain is on the cytoplasmic side; the sequence is CYARRRKGKG…PTGRLPHSYF (77 aa). The segment at 591–661 is disordered; the sequence is KGKGHSVEDG…PTGRLPHSYF (71 aa). Positions 606–623 are enriched in basic and acidic residues; the sequence is DGVKKGLDGKGEVKKLSE.

It is found in the membrane. Functionally, may act as an inhibitor of TGF-beta signaling. This Xenopus tropicalis (Western clawed frog) protein is Vasorin (vasn).